The chain runs to 652 residues: Forkhead box protein O1-A (652 aa).

3 disordered regions span residues 1–57 (MADA…EPSS), 208–277 (SSWW…NSHS), and 359–406 (NLLS…QQTQ). Polar residues predominate over residues 41–57 (DSNTSSPAPSVKQEPSS). The segment at residues 134–228 (WGNMSYADLI…KSGKSPRRRA (95 aa)) is a DNA-binding region (fork-head). Residues 238 to 249 (AKSRGRAAKKKL) show a composition bias toward basic residues. Over residues 362 to 397 (SPKNPSTGGPGSGSNQSSPSSLMQASPGYSPYSSPG) the composition is skewed to low complexity.

It is found in the cytoplasm. It localises to the nucleus. Its function is as follows. Transcription factor that regulates metabolic homeostasis in response to oxidative stress. Binds to the consensus sequence 5'-TT[G/A]TTTTG-3' and the related Daf-16 family binding element (DBE) with consensus sequence 5'-TT[G/A]TTTAC-3'. Main regulator of redox balance and osteoblast numbers and controls bone mass. Orchestrates the endocrine function of the skeleton in regulating glucose metabolism. May be involved in regulating cellular homeostasis in the eye. May act as a positive regulator of apoptosis in cardiac smooth muscle cells as a result of its transcriptional activation of pro-apoptotic genes. This chain is Forkhead box protein O1-A (foxo1a), found in Danio rerio (Zebrafish).